Consider the following 57-residue polypeptide: Small ribosomal subunit protein bS21 (57 aa).

The protein belongs to the bacterial ribosomal protein bS21 family.

The sequence is that of Small ribosomal subunit protein bS21 from Geobacillus kaustophilus (strain HTA426).